The chain runs to 270 residues: Cell surface glycoprotein CD200 receptor 5 (270 aa).

Positions 1-25 are cleaved as a signal peptide; that stretch reads MHALGRTPALTLLIFINIFVSGSRC. The Extracellular portion of the chain corresponds to 26 to 241; the sequence is TDKNQTIQND…STTTTTSLLT (216 aa). One can recognise an Ig-like V-type domain in the interval 39–145; it reads PLTQVNTTVS…GNFGRVYDLQ (107 aa). Asn44 carries N-linked (GlcNAc...) asparagine glycosylation. 2 disulfide bridges follow: Cys59–Cys129 and Cys164–Cys213. The 96-residue stretch at 134–229 folds into the Ig-like C2-type domain; that stretch reads PEGNFGRVYD…GNKSLFIELN (96 aa). N-linked (GlcNAc...) asparagine glycosylation is found at Asn192 and Asn221. A helical transmembrane segment spans residues 242-262; the sequence is ILYVKMVLLGIILLHVGFAFF. Residues 263–270 lie on the Cytoplasmic side of the membrane; it reads QKRNVIRT.

The protein belongs to the CD200R family.

It localises to the membrane. Functionally, may not be a receptor for the CD200/OX2 cell surface glycoprotein. The protein is Cell surface glycoprotein CD200 receptor 5 (Cd200r5) of Mus musculus (Mouse).